A 444-amino-acid chain; its full sequence is Tubulin beta-8 chain (444 aa).

Residues 1–4 (MREI) carry the MREI motif motif. Residues glutamine 11, glutamate 69, serine 138, glycine 142, threonine 143, and glycine 144 each contribute to the GTP site. Glutamate 69 is a binding site for Mg(2+). Serine 172 carries the phosphoserine; by CDK1 modification. Residues asparagine 204 and asparagine 226 each contribute to the GTP site. At glutamate 436 the chain carries 5-glutamyl polyglutamate.

It belongs to the tubulin family. As to quaternary structure, dimer of alpha and beta chains. A typical microtubule is a hollow water-filled tube with an outer diameter of 25 nm and an inner diameter of 15 nM. Alpha-beta heterodimers associate head-to-tail to form protofilaments running lengthwise along the microtubule wall with the beta-tubulin subunit facing the microtubule plus end conferring a structural polarity. Microtubules usually have 13 protofilaments but different protofilament numbers can be found in some organisms and specialized cells. It depends on Mg(2+) as a cofactor. Post-translationally, some glutamate residues at the C-terminus are polyglycylated, resulting in polyglycine chains on the gamma-carboxyl group. Glycylation is mainly limited to tubulin incorporated into axonemes (cilia and flagella) whereas glutamylation is prevalent in neuronal cells, centrioles, axonemes, and the mitotic spindle. Both modifications can coexist on the same protein on adjacent residues, and lowering polyglycylation levels increases polyglutamylation, and reciprocally. Cilia and flagella glycylation is required for their stability and maintenance. Flagella glycylation controls sperm motility. Some glutamate residues at the C-terminus are polyglutamylated, resulting in polyglutamate chains on the gamma-carboxyl group. Polyglutamylation plays a key role in microtubule severing by spastin (SPAST). SPAST preferentially recognizes and acts on microtubules decorated with short polyglutamate tails: severing activity by SPAST increases as the number of glutamates per tubulin rises from one to eight, but decreases beyond this glutamylation threshold. Glutamylation is also involved in cilia motility. In terms of processing, phosphorylated on Ser-172 by CDK1 during the cell cycle, from metaphase to telophase, but not in interphase. This phosphorylation inhibits tubulin incorporation into microtubules.

It is found in the cytoplasm. The protein resides in the cytoskeleton. The protein localises to the spindle. Its function is as follows. Tubulin is the major constituent of microtubules, a cylinder consisting of laterally associated linear protofilaments composed of alpha- and beta-tubulin heterodimers. Microtubules grow by the addition of GTP-tubulin dimers to the microtubule end, where a stabilizing cap forms. Below the cap, tubulin dimers are in GDP-bound state, owing to GTPase activity of alpha-tubulin. Has a key role in meiotic spindle assembly and oocyte maturation. The chain is Tubulin beta-8 chain (TUBB8) from Papio hamadryas (Hamadryas baboon).